Here is a 777-residue protein sequence, read N- to C-terminus: Degenerin unc-8 (777 aa).

At 1-128 (MSPLLTWNLI…VATSSFFGRY (128 aa)) the chain is on the cytoplasmic side. A helical transmembrane segment spans residues 129–149 (VWAALFMCMLMAFLLQTYWTM). Topologically, residues 150 to 689 (SEYLQYRTII…KETAGYTLVN (540 aa)) are extracellular. Residues Asn274, Asn319, Asn357, Asn411, Asn453, Asn533, and Asn597 are each glycosylated (N-linked (GlcNAc...) asparagine). The helical transmembrane segment at 690–710 (LFSDFGGNIGLWIGFSVITFA) threads the bilayer. Topologically, residues 711–777 (EFAELFCEIC…NESTKELMSK (67 aa)) are cytoplasmic. The segment at 752–777 (QRSPKKSQPGEDEVSTNESTKELMSK) is disordered.

This sequence belongs to the amiloride-sensitive sodium channel (TC 1.A.6) family.

The protein resides in the membrane. In terms of biological role, sodium permeable non-voltage-sensitive ion channel. Involved in the activity-dependent removal of selected presynaptic proteins, such as synaptobrevin snb-1, and Ras-related rab-3, in the remodeling of GABAergic motor neurons. The polypeptide is Degenerin unc-8 (Caenorhabditis elegans).